A 501-amino-acid polypeptide reads, in one-letter code: MHLRMASPPQPGPYMPDLPAVPAWLNKGDTAWQLVAATFVGIQSMPGLVVIYGSIVKKKWAVNSAFMALYAYASTLIVWVLVGFRMAFGDRLLPFWAKAGPALTQDFLVQRAVFPATAHYGSDGTLETPRTEPFYAEAALVLFEFEFAAITLVLLAGSLLGRMNIKAWMAFTPLWLLFSYTVGAFSLWGGGFLYQWGVIDYSGGYVIHLSSGVAGFTAAYWVGPRLKSDRERFSPNNILLMIAGGGLLWLGWAGFNGGAPYAPNVTATVAVLNTNVSAATSLLTWTCLDVIFFGKPSVIGAVQGMMTGLVCITPGAGLVHTWSAMLMGMFAGSVPWFTMMILHKKSTFLMKVDDTLAVFHTHAVAGILGGVLTGLLATPELCALDCPIPNMRGVFYGSGIGQLGKQLGGALFVTVWNLIVTSAILLCIGLFIPLRMSDDQLMIGDDAAHGEEAYALWGDGEKFDVTRPETTRTGGAGGAGREDTMEQRLTNMGARGVTIQL.

Transmembrane regions (helical) follow at residues 35 to 55 (VAAT…YGSI), 64 to 84 (SAFM…LVGF), 140 to 160 (LVLF…GSLL), 174 to 194 (LWLL…GFLY), 203 to 223 (GGYV…YWVG), 238 to 258 (ILLM…FNGG), 274 to 294 (TNVS…IFFG), 298 to 318 (VIGA…GAGL), 322 to 342 (WSAM…MMIL), 356 to 376 (LAVF…TGLL), and 412 to 432 (FVTV…GLFI).

The protein belongs to the ammonia transporter channel (TC 1.A.11.2) family.

The protein localises to the membrane. In terms of biological role, involved in ammonium transport. The polypeptide is Ammonium transporter 2 member 2 (AMT2-2) (Oryza sativa subsp. japonica (Rice)).